A 333-amino-acid chain; its full sequence is Tetraacyldisaccharide 4'-kinase (333 aa).

55-62 contacts ATP; the sequence is SVGGNGKT.

This sequence belongs to the LpxK family.

It catalyses the reaction a lipid A disaccharide + ATP = a lipid IVA + ADP + H(+). It functions in the pathway glycolipid biosynthesis; lipid IV(A) biosynthesis; lipid IV(A) from (3R)-3-hydroxytetradecanoyl-[acyl-carrier-protein] and UDP-N-acetyl-alpha-D-glucosamine: step 6/6. In terms of biological role, transfers the gamma-phosphate of ATP to the 4'-position of a tetraacyldisaccharide 1-phosphate intermediate (termed DS-1-P) to form tetraacyldisaccharide 1,4'-bis-phosphate (lipid IVA). In Aeromonas hydrophila subsp. hydrophila (strain ATCC 7966 / DSM 30187 / BCRC 13018 / CCUG 14551 / JCM 1027 / KCTC 2358 / NCIMB 9240 / NCTC 8049), this protein is Tetraacyldisaccharide 4'-kinase.